A 78-amino-acid polypeptide reads, in one-letter code: Large ribosomal subunit protein bL28 (78 aa).

A disordered region spans residues 1 to 22 (MAKVCQVTGKRPVTGHNVSHAK).

It belongs to the bacterial ribosomal protein bL28 family.

The sequence is that of Large ribosomal subunit protein bL28 from Saccharophagus degradans (strain 2-40 / ATCC 43961 / DSM 17024).